A 104-amino-acid chain; its full sequence is uncharacterized protein (104 aa).

The segment at 51-70 (NPGRSLDNNKDVSDKGRSEF) is disordered. Residues 57–70 (DNNKDVSDKGRSEF) show a composition bias toward basic and acidic residues.

The protein belongs to the protein-tyrosine phosphatase family.

This is an uncharacterized protein from Xanthomonas campestris pv. campestris (strain ATCC 33913 / DSM 3586 / NCPPB 528 / LMG 568 / P 25).